A 362-amino-acid polypeptide reads, in one-letter code: Flagellar P-ring protein (362 aa).

An N-terminal signal peptide occupies residues 1–18 (MKHIALIVLYFLSFSVQA).

Belongs to the FlgI family. In terms of assembly, the basal body constitutes a major portion of the flagellar organelle and consists of four rings (L,P,S, and M) mounted on a central rod.

The protein resides in the periplasm. It localises to the bacterial flagellum basal body. In terms of biological role, assembles around the rod to form the L-ring and probably protects the motor/basal body from shearing forces during rotation. The sequence is that of Flagellar P-ring protein from Marinomonas sp. (strain MWYL1).